Here is a 134-residue protein sequence, read N- to C-terminus: ATP synthase epsilon chain (134 aa).

Belongs to the ATPase epsilon chain family. In terms of assembly, F-type ATPases have 2 components, CF(1) - the catalytic core - and CF(0) - the membrane proton channel. CF(1) has five subunits: alpha(3), beta(3), gamma(1), delta(1), epsilon(1). CF(0) has three main subunits: a, b and c.

Its subcellular location is the cell membrane. Its function is as follows. Produces ATP from ADP in the presence of a proton gradient across the membrane. In Carboxydothermus hydrogenoformans (strain ATCC BAA-161 / DSM 6008 / Z-2901), this protein is ATP synthase epsilon chain.